The chain runs to 399 residues: MGIVERIKEIEAEMARTQKNKATEYHLGQLKAKIAKLRTQLLEPPKGSSGGGDGFEVTKYGHGRVALIGFPSVGKSTLLTMLTGTHSEAASYEFTTLTCIPGVIHYNDTKIQLLDLPGIIEGASEGKGRGRQVIAVAKSSDLVLMVLDASKSEGHRQILTKELEAVGLRLNKRPPQIYFKKKKTGGISFNTTTPLTRIDEKLCYQILHEYKIHNAEVLFREDATVDDFIDVVEGNRKYIKCVYVYNKIDVVGIDDVDRLARQPNSIVISCNLKLNLDRLLARMWDEMGLVRVYSKPQSQQPDFDEPFVLSADRGGCTVEDFCNQVHRTLVKDMKYALVWGTSARHYPQHCGLFHHLEDEDVVQIVKKKVREEGGRGRFKSHSNAPARIADREKKAPLKQ.

Positions 63-288 (GRVALIGFPS…LLARMWDEMG (226 aa)) constitute an OBG-type G domain. Residues 69–76 (GFPSVGKS), 115–119 (DLPGI), and 246–249 (NKID) each bind GTP. Residues 288 to 366 (GLVRVYSKPQ…EDEDVVQIVK (79 aa)) enclose the TGS domain. A disordered region spans residues 372–399 (EGGRGRFKSHSNAPARIADREKKAPLKQ). A compositionally biased stretch (basic and acidic residues) spans 388–399 (IADREKKAPLKQ).

Belongs to the TRAFAC class OBG-HflX-like GTPase superfamily. OBG GTPase family.

The protein resides in the cytoplasm. Its function is as follows. Binds GDP and GTP, and has low GTPase activity. This is Developmentally-regulated G-protein 2 (DRG2) from Arabidopsis thaliana (Mouse-ear cress).